The primary structure comprises 475 residues: Adenosylhomocysteinase (475 aa).

Substrate contacts are provided by T61, D140, and E200. 201-203 is an NAD(+) binding site; that stretch reads TTT. Substrate is bound by residues K230 and D234. NAD(+) contacts are provided by residues N235, 264-269, E287, N322, 343-345, and N388; these read GYGDVG and IGH.

Belongs to the adenosylhomocysteinase family. NAD(+) is required as a cofactor.

The protein resides in the cytoplasm. The enzyme catalyses S-adenosyl-L-homocysteine + H2O = L-homocysteine + adenosine. Its pathway is amino-acid biosynthesis; L-homocysteine biosynthesis; L-homocysteine from S-adenosyl-L-homocysteine: step 1/1. Functionally, may play a key role in the regulation of the intracellular concentration of adenosylhomocysteine. The chain is Adenosylhomocysteinase from Paracidovorax citrulli (strain AAC00-1) (Acidovorax citrulli).